We begin with the raw amino-acid sequence, 178 residues long: MFEATTILGYKGDGIAVIGGDGQVTFGNTVLKGNATKIRTLYNGQILAGFAGSTADAFNLFDMFEKILENKKGDLLKSVIEFSKEWRKDRYLRRLEAMMIVLNTKHIFILSGTGDVVEPEDGKIAAIGSGGNFALSAARALDKHANLDAKTLVEESLKIAGELCIYTNTNIKLLTLEE.

Thr-5 is an active-site residue. Residues Gly-161, Cys-164, and Thr-167 each contribute to the Na(+) site.

It belongs to the peptidase T1B family. HslV subfamily. A double ring-shaped homohexamer of HslV is capped on each side by a ring-shaped HslU homohexamer. The assembly of the HslU/HslV complex is dependent on binding of ATP.

The protein resides in the cytoplasm. The enzyme catalyses ATP-dependent cleavage of peptide bonds with broad specificity.. Allosterically activated by HslU binding. In terms of biological role, protease subunit of a proteasome-like degradation complex believed to be a general protein degrading machinery. This chain is ATP-dependent protease subunit HslV, found in Nitratiruptor sp. (strain SB155-2).